Here is a 730-residue protein sequence, read N- to C-terminus: Heterogeneous nuclear ribonucleoprotein M (730 aa).

The span at 1-13 (MAAGVEAAAEVAA) shows a compositional bias: low complexity. The tract at residues 1–62 (MAAGVEAAAE…NIKRGGNRFE (62 aa)) is disordered. Residue alanine 2 is modified to N-acetylalanine. Lysine 17 participates in a covalent cross-link: Glycyl lysine isopeptide (Lys-Gly) (interchain with G-Cter in SUMO2). Serine 29 carries the phosphoserine modification. Lysine 37 participates in a covalent cross-link: Glycyl lysine isopeptide (Lys-Gly) (interchain with G-Cter in SUMO2). Residues 38–50 (GEGERPAQNEKRK) are compositionally biased toward basic and acidic residues. Residues lysine 69 and lysine 83 each participate in a glycyl lysine isopeptide (Lys-Gly) (interchain with G-Cter in SUMO2) cross-link. RRM domains are found at residues 71–149 (YRAF…EDPD) and 204–281 (STVF…MDER). Serine 86 carries the phosphoserine modification. Glycyl lysine isopeptide (Lys-Gly) (interchain with G-Cter in SUMO2) cross-links involve residues lysine 88 and lysine 127. Lysine 134 is subject to N6-acetyllysine; alternate. Residue lysine 134 forms a Glycyl lysine isopeptide (Lys-Gly) (interchain with G-Cter in SUMO2); alternate linkage. Residues lysine 143 and lysine 145 each participate in a glycyl lysine isopeptide (Lys-Gly) (interchain with G-Cter in SUMO2) cross-link. Phosphoserine is present on serine 204. Lysine 221 is covalently cross-linked (Glycyl lysine isopeptide (Lys-Gly) (interchain with G-Cter in SUMO2)). Lysine 277 is subject to N6-acetyllysine; alternate. Residue lysine 277 forms a Glycyl lysine isopeptide (Lys-Gly) (interchain with G-Cter in SUMO2); alternate linkage. Residues lysine 285 and lysine 345 each participate in a glycyl lysine isopeptide (Lys-Gly) (interchain with G-Cter in SUMO2) cross-link. Residues serine 365 and serine 377 each carry the phosphoserine modification. Glycyl lysine isopeptide (Lys-Gly) (interchain with G-Cter in SUMO2) cross-links involve residues lysine 381 and lysine 388. At serine 397 the chain carries Phosphoserine. 4 consecutive repeat copies span residues 400–405 (GIERMG), 407–412 (GIDRLG), 415–420 (GMERMG), and 426–431 (GMDRVG). The 27 X 6 AA repeats of [GEVSTPAN]-[ILMV]-[DE]-[RH]-[MLVI]-[GAV] stretch occupies residues 400 to 608 (GIERMGPGID…ALGAGIERMG (209 aa)). Serine 432 bears the Phosphoserine mark. A run of 3 repeats spans residues 433 to 438 (EIERMG), 440 to 445 (VMDRMG), and 446 to 451 (SVERMG). Serine 452 is subject to Phosphoserine. 4 consecutive repeat copies span residues 453 to 458 (GIERMG), 461 to 466 (GLDHMA), 468 to 473 (SIERMG), and 475 to 480 (TMERIG). Serine 468 bears the Phosphoserine mark. At serine 481 the chain carries Phosphoserine. Repeat copies occupy residues 482–487 (GVERMG), 493–498 (GLERMA), 500–505 (PIDRVG), 507–512 (TIERMG), 514–519 (GVERMG), 521–526 (AIERMG), 528–533 (SMERMV), 540–545 (GLERMG), 547–552 (VMDRMA), 554–559 (GLERMG), 562–566 (NLERM), 567–572 (GLERMG), 575–579 (SLERM), 580–585 (GLERMG), 588–593 (SLERMG), and 603–608 (GIERMG). Omega-N-methylarginine is present on arginine 496. Serine 528 carries the post-translational modification Phosphoserine. Serine 575 is modified (phosphoserine). Position 588 is a phosphoserine (serine 588). Serine 618, serine 633, and serine 637 each carry phosphoserine. Lysine 651 participates in a covalent cross-link: Glycyl lysine isopeptide (Lys-Gly) (interchain with G-Cter in SUMO2). In terms of domain architecture, RRM 3 spans 653 to 729 (CQIFVRNLPF…REIDVRIDRN (77 aa)). Threonine 665 is modified (phosphothreonine). Lysine 667 is covalently cross-linked (Glycyl lysine isopeptide (Lys-Gly) (interchain with G-Cter in SUMO2)). An N6-acetyllysine modification is found at lysine 672. Glycyl lysine isopeptide (Lys-Gly) (interchain with G-Cter in SUMO2) cross-links involve residues lysine 685 and lysine 692. The residue at position 698 (lysine 698) is an N6-acetyllysine; alternate. Residue lysine 698 forms a Glycyl lysine isopeptide (Lys-Gly) (interchain with G-Cter in SUMO2); alternate linkage. Lysine 698 is covalently cross-linked (Glycyl lysine isopeptide (Lys-Gly) (interchain with G-Cter in SUMO1); alternate). A Phosphoserine modification is found at serine 701. Lysine 716 is covalently cross-linked (Glycyl lysine isopeptide (Lys-Gly) (interchain with G-Cter in SUMO2)).

In terms of assembly, identified in the spliceosome C complex. Interacts with PPIA/CYPA. Post-translationally, sumoylated.

The protein localises to the nucleus. The protein resides in the nucleolus. In terms of biological role, pre-mRNA binding protein in vivo, binds avidly to poly(G) and poly(U) RNA homopolymers in vitro. Involved in splicing. Acts as a receptor for carcinoembryonic antigen in Kupffer cells, may initiate a series of signaling events leading to tyrosine phosphorylation of proteins and induction of IL-1 alpha, IL-6, IL-10 and tumor necrosis factor alpha cytokines. The protein is Heterogeneous nuclear ribonucleoprotein M (HNRNPM) of Homo sapiens (Human).